The sequence spans 165 residues: Lipoprotein signal peptidase (165 aa).

The next 3 helical transmembrane spans lie at 9–29, 65–85, and 97–119; these read PFLW…LAVV, WQKY…LFFL, and TGYA…HGFV. Residues D121 and D139 contribute to the active site. A helical membrane pass occupies residues 134–154; sequence VFNVADIAICIGAGLLAIDAF.

It belongs to the peptidase A8 family.

It is found in the cell inner membrane. The catalysed reaction is Release of signal peptides from bacterial membrane prolipoproteins. Hydrolyzes -Xaa-Yaa-Zaa-|-(S,diacylglyceryl)Cys-, in which Xaa is hydrophobic (preferably Leu), and Yaa (Ala or Ser) and Zaa (Gly or Ala) have small, neutral side chains.. The protein operates within protein modification; lipoprotein biosynthesis (signal peptide cleavage). Functionally, this protein specifically catalyzes the removal of signal peptides from prolipoproteins. The chain is Lipoprotein signal peptidase from Histophilus somni (strain 2336) (Haemophilus somnus).